Reading from the N-terminus, the 497-residue chain is Cytochrome P450 2D6 (497 aa).

D301 contributes to the substrate binding site. Residue C443 participates in heme binding.

Belongs to the cytochrome P450 family. Requires heme as cofactor.

Its subcellular location is the endoplasmic reticulum membrane. It localises to the microsome membrane. The enzyme catalyses (5Z,8Z,11Z,14Z)-eicosatetraenoate + reduced [NADPH--hemoprotein reductase] + O2 = (8R,9S)-epoxy-(5Z,11Z,14Z)-eicosatrienoate + oxidized [NADPH--hemoprotein reductase] + H2O + H(+). It catalyses the reaction (5Z,8Z,11Z,14Z)-eicosatetraenoate + reduced [NADPH--hemoprotein reductase] + O2 = (11R,12S)-epoxy-(5Z,8Z,14Z)-eicosatrienoate + oxidized [NADPH--hemoprotein reductase] + H2O + H(+). The catalysed reaction is (5Z,8Z,11Z,14Z)-eicosatetraenoate + reduced [NADPH--hemoprotein reductase] + O2 = (14S,15R)-epoxy-(5Z,8Z,11Z)-eicosatrienoate + oxidized [NADPH--hemoprotein reductase] + H2O + H(+). It carries out the reaction N-(5Z,8Z,11Z,14Z-eicosatetraenoyl)-ethanolamine + reduced [NADPH--hemoprotein reductase] + O2 = N-(8,9-epoxy-5Z,11Z,14Z-eicosatrienoyl)-ethanolamine + oxidized [NADPH--hemoprotein reductase] + H2O + H(+). The enzyme catalyses N-(5Z,8Z,11Z,14Z-eicosatetraenoyl)-ethanolamine + reduced [NADPH--hemoprotein reductase] + O2 = N-(11,12-epoxy-5Z,8Z,14Z-eicosatrienoyl)-ethanolamine + oxidized [NADPH--hemoprotein reductase] + H2O + H(+). It catalyses the reaction N-(5Z,8Z,11Z,14Z-eicosatetraenoyl)-ethanolamine + reduced [NADPH--hemoprotein reductase] + O2 = N-(14,15-epoxy-5Z,8Z,11Z-eicosatrienoyl)-ethanolamine + oxidized [NADPH--hemoprotein reductase] + H2O + H(+). The catalysed reaction is N-(5Z,8Z,11Z,14Z-eicosatetraenoyl)-ethanolamine + reduced [NADPH--hemoprotein reductase] + O2 = N-(20-hydroxy-5Z,8Z,11Z,14Z-eicosatetraenoyl)-ethanolamine + oxidized [NADPH--hemoprotein reductase] + H2O + H(+). It carries out the reaction (5Z,8Z,11Z,14Z,17Z)-eicosapentaenoate + reduced [NADPH--hemoprotein reductase] + O2 = (17S,18R)-epoxy-(5Z,8Z,11Z,14Z)-eicosatetraenoate + oxidized [NADPH--hemoprotein reductase] + H2O + H(+). The enzyme catalyses (4Z,7Z,10Z,13Z,16Z,19Z)-docosahexaenoate + reduced [NADPH--hemoprotein reductase] + O2 = (19R,20S)-epoxy-(4Z,7Z,10Z,13Z,16Z)-docosapentaenoate + oxidized [NADPH--hemoprotein reductase] + H2O + H(+). It catalyses the reaction (4Z,7Z,10Z,13Z,16Z,19Z)-docosahexaenoate + reduced [NADPH--hemoprotein reductase] + O2 = (19S,20R)-epoxy-(4Z,7Z,10Z,13Z,16Z)-docosapentaenoate + oxidized [NADPH--hemoprotein reductase] + H2O + H(+). The catalysed reaction is cholesterol + reduced [NADPH--hemoprotein reductase] + O2 = 25-hydroxycholesterol + oxidized [NADPH--hemoprotein reductase] + H2O + H(+). It carries out the reaction all-trans-retinol + reduced [NADPH--hemoprotein reductase] + O2 = all-trans-retinal + oxidized [NADPH--hemoprotein reductase] + 2 H2O + H(+). Its pathway is cofactor metabolism; retinol metabolism. It functions in the pathway lipid metabolism; fatty acid metabolism. The protein operates within steroid metabolism; cholesterol metabolism. In terms of biological role, a cytochrome P450 monooxygenase involved in the metabolism of fatty acids, steroids and retinoids. Mechanistically, uses molecular oxygen inserting one oxygen atom into a substrate, and reducing the second into a water molecule, with two electrons provided by NADPH via cytochrome P450 reductase (NADPH--hemoprotein reductase). Catalyzes the epoxidation of double bonds of polyunsaturated fatty acids (PUFA). Metabolizes endocannabinoid arachidonoylethanolamide (anandamide) to 20-hydroxyeicosatetraenoic acid ethanolamide (20-HETE-EA) and 8,9-, 11,12-, and 14,15-epoxyeicosatrienoic acid ethanolamides (EpETrE-EAs), potentially modulating endocannabinoid system signaling. Catalyzes the hydroxylation of carbon-hydrogen bonds. Metabolizes cholesterol toward 25-hydroxycholesterol, a physiological regulator of cellular cholesterol homeostasis. Catalyzes the oxidative transformations of all-trans retinol to all-trans retinal, a precursor for the active form all-trans-retinoic acid. Also involved in the oxidative metabolism of drugs such as antiarrhythmics, adrenoceptor antagonists, and tricyclic antidepressants. This is Cytochrome P450 2D6 (CYP2D6) from Pan troglodytes (Chimpanzee).